A 144-amino-acid polypeptide reads, in one-letter code: Large ribosomal subunit protein uL13 (144 aa).

The protein belongs to the universal ribosomal protein uL13 family. In terms of assembly, part of the 50S ribosomal subunit.

Its function is as follows. This protein is one of the early assembly proteins of the 50S ribosomal subunit, although it is not seen to bind rRNA by itself. It is important during the early stages of 50S assembly. The protein is Large ribosomal subunit protein uL13 of Nitrosomonas europaea (strain ATCC 19718 / CIP 103999 / KCTC 2705 / NBRC 14298).